The primary structure comprises 245 residues: Uridylate kinase (245 aa).

12-15 serves as a coordination point for ATP; it reads KISG. Residue Gly55 participates in UMP binding. Positions 56 and 60 each coordinate ATP. Residues Asp76 and 137–144 contribute to the UMP site; that span reads AGAPYLTT. Thr164, Tyr171, and Asp174 together coordinate ATP.

It belongs to the UMP kinase family. Homohexamer.

It localises to the cytoplasm. The enzyme catalyses UMP + ATP = UDP + ADP. Its pathway is pyrimidine metabolism; CTP biosynthesis via de novo pathway; UDP from UMP (UMPK route): step 1/1. Inhibited by UTP. In terms of biological role, catalyzes the reversible phosphorylation of UMP to UDP. The chain is Uridylate kinase from Chlamydia muridarum (strain MoPn / Nigg).